The chain runs to 129 residues: Small ribosomal subunit protein uS9 (129 aa).

The protein belongs to the universal ribosomal protein uS9 family.

This is Small ribosomal subunit protein uS9 from Chlorobium luteolum (strain DSM 273 / BCRC 81028 / 2530) (Pelodictyon luteolum).